Here is a 434-residue protein sequence, read N- to C-terminus: Serine hydroxymethyltransferase (434 aa).

Residues leucine 128 and 132 to 134 (GHL) each bind (6S)-5,6,7,8-tetrahydrofolate. Lysine 237 is modified (N6-(pyridoxal phosphate)lysine).

This sequence belongs to the SHMT family. As to quaternary structure, homodimer. Requires pyridoxal 5'-phosphate as cofactor.

It localises to the cytoplasm. It carries out the reaction (6R)-5,10-methylene-5,6,7,8-tetrahydrofolate + glycine + H2O = (6S)-5,6,7,8-tetrahydrofolate + L-serine. It functions in the pathway one-carbon metabolism; tetrahydrofolate interconversion. It participates in amino-acid biosynthesis; glycine biosynthesis; glycine from L-serine: step 1/1. Its function is as follows. Catalyzes the reversible interconversion of serine and glycine with tetrahydrofolate (THF) serving as the one-carbon carrier. This reaction serves as the major source of one-carbon groups required for the biosynthesis of purines, thymidylate, methionine, and other important biomolecules. Also exhibits THF-independent aldolase activity toward beta-hydroxyamino acids, producing glycine and aldehydes, via a retro-aldol mechanism. This is Serine hydroxymethyltransferase from Corynebacterium efficiens (strain DSM 44549 / YS-314 / AJ 12310 / JCM 11189 / NBRC 100395).